Reading from the N-terminus, the 351-residue chain is MKALAKLKKQPGIWMIDDAPIPEYGYNDVLIKIKKTAICGTDLHIYNWDKWSQNTIPVPMITGHEFAGEVVAKGDGVTSVDIGDRVSGEGHLVCGQCRNCRAGKRHLCRKTIGIGVNVQGAFAEYLVMPAVNVFKIPDSISDDIASTFDPMGNAIHTALSFNLTGEDVLITGAGPIGLMAVKIARFCGARRIVITDINEYRLQMARDFGATVALNVAPFKNQDELVKQMRKVMSDIGMTEGFDIGLEMSGINSAISMMLDVMNHGGKLSLLGISAGDISVDWGAILFKGLTLKGIYGREMFETWYLMTSMLQAGMDMNPIITHRLHIDEFQKGFEIMKSGQCGKVILDWSS.

C39 is a binding site for Zn(2+). Active-site charge relay system residues include T41 and H44. Zn(2+)-binding residues include H64, E65, C94, C97, C100, and C108. NAD(+) contacts are provided by residues I176, D196, R201, 271–273 (LGI), and 295–296 (IY).

It belongs to the zinc-containing alcohol dehydrogenase family. As to quaternary structure, homotetramer. Requires Zn(2+) as cofactor.

Its subcellular location is the cytoplasm. The catalysed reaction is L-threonine + NAD(+) = (2S)-2-amino-3-oxobutanoate + NADH + H(+). Its pathway is amino-acid degradation; L-threonine degradation via oxydo-reductase pathway; glycine from L-threonine: step 1/2. Its function is as follows. Catalyzes the NAD(+)-dependent oxidation of L-threonine to 2-amino-3-ketobutyrate. This is L-threonine 3-dehydrogenase from Francisella tularensis subsp. novicida (strain U112).